Here is an 807-residue protein sequence, read N- to C-terminus: Glycerol-3-phosphate acyltransferase (807 aa).

The HXXXXD motif signature appears at 305–310 (CHRSHM).

Belongs to the GPAT/DAPAT family.

Its subcellular location is the cell inner membrane. The enzyme catalyses sn-glycerol 3-phosphate + an acyl-CoA = a 1-acyl-sn-glycero-3-phosphate + CoA. It participates in phospholipid metabolism; CDP-diacylglycerol biosynthesis; CDP-diacylglycerol from sn-glycerol 3-phosphate: step 1/3. This is Glycerol-3-phosphate acyltransferase from Aliivibrio fischeri (strain MJ11) (Vibrio fischeri).